Reading from the N-terminus, the 200-residue chain is dITP/XTP pyrophosphatase (200 aa).

7–12 (TSNKHK) provides a ligand contact to substrate. 2 residues coordinate Mg(2+): glutamate 38 and aspartate 73. Catalysis depends on aspartate 73, which acts as the Proton acceptor. Substrate is bound by residues serine 74, 154–157 (FGYD), lysine 177, and 182–183 (HR).

Belongs to the HAM1 NTPase family. Homodimer. Requires Mg(2+) as cofactor.

The enzyme catalyses XTP + H2O = XMP + diphosphate + H(+). The catalysed reaction is dITP + H2O = dIMP + diphosphate + H(+). It catalyses the reaction ITP + H2O = IMP + diphosphate + H(+). Functionally, pyrophosphatase that catalyzes the hydrolysis of nucleoside triphosphates to their monophosphate derivatives, with a high preference for the non-canonical purine nucleotides XTP (xanthosine triphosphate), dITP (deoxyinosine triphosphate) and ITP. Seems to function as a house-cleaning enzyme that removes non-canonical purine nucleotides from the nucleotide pool, thus preventing their incorporation into DNA/RNA and avoiding chromosomal lesions. This is dITP/XTP pyrophosphatase from Campylobacter jejuni subsp. jejuni serotype O:2 (strain ATCC 700819 / NCTC 11168).